The sequence spans 294 residues: Nucleotide-binding protein Daud_0300 (294 aa).

G11 to T18 contacts ATP. D62 to G65 is a GTP binding site.

It belongs to the RapZ-like family.

In terms of biological role, displays ATPase and GTPase activities. The polypeptide is Nucleotide-binding protein Daud_0300 (Desulforudis audaxviator (strain MP104C)).